We begin with the raw amino-acid sequence, 623 residues long: Oviduct-specific glycoprotein (623 aa).

An N-terminal signal peptide occupies residues 1-21 (MWKLLLWVGLVLVLKHHDGAA). The GH18 domain occupies 22–385 (HKLVCYFTNW…YVMNDILVRA (364 aa)). Cys-26 and Cys-51 are disulfide-bonded. Chitin contacts are provided by residues 71-72 (LQ), 98-101 (GGWN), Tyr-142, 211-214 (LSYD), and Trp-355. N-linked (GlcNAc...) asparagine glycosylation is found at Asn-402 and Asn-441. 2 disordered regions span residues 539–558 (LTPV…VSPG) and 594–623 (RKIS…PQDG). A compositionally biased stretch (polar residues) spans 613–623 (TSETGTHPQDG).

This sequence belongs to the glycosyl hydrolase 18 family. In terms of tissue distribution, oviduct.

It is found in the cytoplasmic vesicle. It localises to the secretory vesicle. Its function is as follows. Binds to oocyte zona pellucida in vivo. May play a role in the fertilization process and/or early embryonic development. In Papio anubis (Olive baboon), this protein is Oviduct-specific glycoprotein (OVGP1).